We begin with the raw amino-acid sequence, 113 residues long: MLPHTSDTTSTFRLKTVFDLVFENRNIIYKADVVNDIIHHRLKVSLPMIKSLFYKMSEFSPYDDYYVKKILAYCLLRDESFAELHSKFCLNEDYKSVFMKNISFDKIDSIIVT.

The chain is Protein C21/B27 from Homo sapiens (Human).